The chain runs to 117 residues: Antimicrobial peptide AmAMP1 (117 aa).

An N-terminal signal peptide occupies residues 1–25 (MPSIRVLFVLLAVILLFMEVKMTSA). The propeptide occupies 26–73 (ASIVKDVDEDETLENEDGEAMENSWPWHGVEDTSDYSDLSDLANSEKR). 3 disulfides stabilise this stretch: Cys-76–Cys-115, Cys-85–Cys-108, and Cys-94–Cys-112.

This sequence belongs to the coral AMP family.

It localises to the secreted. Coral peptide that probably acts as an antimicrobial peptide in the surface mucous layer of planula larvae and likely also in adults. Shows moderate to high activity against some Gram-negative and Gram-positive bacteria (tested on E.coli, B.megaterium, S.aureus, E.aesturaii, B.algicola, Acinetobacter spec.). Does not show antibacterial activity against the coral pathogen V.coralliilyticus. The polypeptide is Antimicrobial peptide AmAMP1 (Acropora millepora (Staghorn coral)).